We begin with the raw amino-acid sequence, 424 residues long: MVSEVTLDKSRQMYEKAKTLIPGGVSSPVRAIKPYPFYTASADGSKIRDLDGNEYIDYCLAYGPAVLGHNHPVIKAAIKEQLDKGWLYGTPTELEVTLAEKVAGYYPSIDMLRFVSTGTEATMSALRLARGFTRKNKFIKIEGGFHGAHDAVLVKAGSGATTLGEPDSLGIPADFTKYTLQAPYNDIETMTTLVEKNRDDLAAVIIEPVLGNIGPILPLPGYLKELRKLTKENDVLLIFDEVITGFRLAMGGAQEYFGVVPDMTTLGKIVGGGLPIGVFGGRREIMEMIAPSGAVYQAGTFSGSPCSVAAGIAVLDYLKKEDIHAKLNSTGDYMRAVVSEIVEDEGLDYTVCGIASMFKIFFGAEPHNYQEALKCDKEGYLSFFHRMLANGVFLPPSQFETNFISAAHSEEDIEKTLEAYVENL.

An N6-(pyridoxal phosphate)lysine modification is found at Lys-268.

This sequence belongs to the class-III pyridoxal-phosphate-dependent aminotransferase family. HemL subfamily. Pyridoxal 5'-phosphate serves as cofactor.

The protein localises to the cytoplasm. The enzyme catalyses (S)-4-amino-5-oxopentanoate = 5-aminolevulinate. The protein operates within porphyrin-containing compound metabolism; protoporphyrin-IX biosynthesis; 5-aminolevulinate from L-glutamyl-tRNA(Glu): step 2/2. The chain is Glutamate-1-semialdehyde 2,1-aminomutase from Methanosarcina acetivorans (strain ATCC 35395 / DSM 2834 / JCM 12185 / C2A).